The sequence spans 326 residues: MKSFGLCLFILVSSPCLLQANLSSDYYTKTCPEFEETLVQIVTDKQIAAPTTAVGTLRLFFHDCMVDGCDASILVASTPRKTSERDADINRSLPGDAFDVITRIKTAVELKCPNIVSCSDILVGATRSLISMVGGPRVNVKFGRKDSLVSDMNRVEGKLARPNMTMDHIISIFESSGLTVQEMVALVGAHTIGFSHCKEFASRIFNKSDQNGPVEMNPKYAAELRKLCANYTNDEQMSAFNDVFTPGKFDNMYYKNLKHGYGLLQSDHAIAFDNRTRSLVDLYAEDETAFFDAFAKAMEKVSEKNVKTGKLGEVRRRCDQYNDYKG.

Positions 1–20 (MKSFGLCLFILVSSPCLLQA) are cleaved as a signal peptide. Residue asparagine 21 is glycosylated (N-linked (GlcNAc...) asparagine). 4 cysteine pairs are disulfide-bonded: cysteine 31/cysteine 112, cysteine 64/cysteine 69, cysteine 118/cysteine 318, and cysteine 197/cysteine 228. Histidine 62 serves as the catalytic Proton acceptor. Residues aspartate 63, valine 66, glycine 68, aspartate 70, and serine 72 each coordinate Ca(2+). Residue asparagine 163 is glycosylated (N-linked (GlcNAc...) asparagine). Histidine 190 provides a ligand contact to heme b. Threonine 191 serves as a coordination point for Ca(2+). N-linked (GlcNAc...) asparagine glycans are attached at residues asparagine 206 and asparagine 230. Positions 242, 245, and 250 each coordinate Ca(2+). The N-linked (GlcNAc...) asparagine glycan is linked to asparagine 274.

It belongs to the peroxidase family. Classical plant (class III) peroxidase subfamily. Heme b is required as a cofactor. The cofactor is Ca(2+).

It localises to the secreted. It catalyses the reaction 2 a phenolic donor + H2O2 = 2 a phenolic radical donor + 2 H2O. Its function is as follows. Removal of H(2)O(2), oxidation of toxic reductants, biosynthesis and degradation of lignin, suberization, auxin catabolism, response to environmental stresses such as wounding, pathogen attack and oxidative stress. These functions might be dependent on each isozyme/isoform in each plant tissue. This Arabidopsis thaliana (Mouse-ear cress) protein is Peroxidase 6 (PER6).